Reading from the N-terminus, the 200-residue chain is Snake venom serine protease VaSP1 (200 aa).

Positions 1 to 200 constitute a Peptidase S1 domain; the sequence is VIGGDECNIN…EIQGIVSYGK (200 aa). Catalysis depends on charge relay system residues Asp88 and Ser182.

As to quaternary structure, monomer. In terms of processing, N-glycosylated. The protein exist in multiple isoforms. In terms of tissue distribution, expressed by the venom gland.

It localises to the secreted. Inhibited by Pefabloc (90% inhibition), DTT (90%), Zn(2+) (80%), trypsin inhibitor II (50%), and benzamidine (45%), but not inhibited by EDTA, Ca(2+), Mg(2+) and L-Cys. Functionally, snake venom serine protease active on several blood coagulation enzymes. It completely cleaves fibrinogen Aalpha chain (FGA) after 120 minutes, partially cleaves Bbeta chain (FGB) (overnight) and has no activity on gamma chain. It does not release fibrinopeptides A and/or B exclusively, since the enzyme does not provoke fibrin polymerisation. It also degrades fibrin as efficiently as plasmin, and exhibits potent ability to cleave plasminogen and prothrombin, as well as heavy chain of factor X (F10). In vitro, it cleaves insulin B-chain (at positions His38-Leu39, Ala40-Leu41 and Tyr16-Leu17). The polypeptide is Snake venom serine protease VaSP1 (Vipera ammodytes ammodytes (Western sand viper)).